The primary structure comprises 274 residues: Bis(5'-nucleosyl)-tetraphosphatase, symmetrical (274 aa).

This sequence belongs to the Ap4A hydrolase family.

It catalyses the reaction P(1),P(4)-bis(5'-adenosyl) tetraphosphate + H2O = 2 ADP + 2 H(+). Functionally, hydrolyzes diadenosine 5',5'''-P1,P4-tetraphosphate to yield ADP. The chain is Bis(5'-nucleosyl)-tetraphosphatase, symmetrical from Shewanella baltica (strain OS185).